The primary structure comprises 413 residues: MIKKLILDPKNVSIIKNGIRNYSKSKSFIQPITTLSEEETLLKETVANFANEKVRPLVKVMDETSELNKGLLKDLFDMNLMGIDISDSYGGANMNFMGSIIAIEELAKVDPAISVIVDVQNTLVNNCINRYGSIQQREKYLSMLATNTVGSFCLSESGSGSDAFALATRAVRQSDGTFVLNGTKQWITNAKEAGVFIVMANVDPSQGYKGITAFIVESNNPGLRIGKKEDKLGIRASSTCEVILDNCVVKPTDILGELGRGYKIAIEGLNEGRIGIAAQMLGLAQGVFDSTIPYLMERKQFGKPIATFQGMQFTYADLAVDIEAGRLLTYNAARIKEAGLPFVFQASMAKLHCSRVAEKAASACISMLGGVGFTKEFPAEKFFRDSKVGQIYEGTSNIQLQTIAKEIVKNFNK.

FAD contacts are provided by residues 152 to 161 and 186 to 188; these read FCLSESGSGS and WIT. Residue Ser161 participates in substrate binding. Substrate is bound by residues Tyr208, Tyr262, and 270-273; that span reads NEGR. FAD is bound by residues Arg298, Gln309, and 366 to 370; that span reads SMLGG. Residue Glu393 is the Proton acceptor of the active site. Residue 395-397 coordinates FAD; it reads TSN.

Belongs to the acyl-CoA dehydrogenase family. Homotetramer. The cofactor is FAD.

It catalyses the reaction 2-methylbutanoyl-CoA + oxidized [electron-transfer flavoprotein] + H(+) = (2E)-2-methylbut-2-enoyl-CoA + reduced [electron-transfer flavoprotein]. Its pathway is lipid metabolism; mitochondrial fatty acid beta-oxidation. It participates in amino-acid degradation; L-isoleucine degradation. In terms of biological role, probable short and branched chain specific acyl-CoA dehydrogenase that catalyzes the removal of one hydrogen from C-2 and C-3 of the fatty acyl-CoA thioester, resulting in the formation of trans-2-enoyl-CoA. The sequence is that of Probable short/branched chain specific acyl-CoA dehydrogenase (acadsb) from Dictyostelium discoideum (Social amoeba).